The sequence spans 26 residues: GTP-binding protein Rheb (26 aa).

5 residues coordinate GTP: serine 1, serine 2, valine 13, tyrosine 16, and threonine 19. Serine 1 is a binding site for Mg(2+). An Effector region motif is present at residues 16-24; it reads YDPTIENTF. Position 19 (threonine 19) interacts with Mg(2+).

This sequence belongs to the small GTPase superfamily. Rheb family.

It carries out the reaction GTP + H2O = GDP + phosphate + H(+). In terms of biological role, binds GTP and exhibits intrinsic GTPase activity. This chain is GTP-binding protein Rheb, found in Crocodylus siamensis (Siamese crocodile).